The chain runs to 426 residues: Serine hydroxymethyltransferase (426 aa).

Residues leucine 113 and 117-119 contribute to the (6S)-5,6,7,8-tetrahydrofolate site; that span reads GHL. Lysine 222 is subject to N6-(pyridoxal phosphate)lysine. 363–365 lines the (6S)-5,6,7,8-tetrahydrofolate pocket; that stretch reads SAF.

The protein belongs to the SHMT family. In terms of assembly, homodimer. Pyridoxal 5'-phosphate is required as a cofactor.

Its subcellular location is the cytoplasm. It carries out the reaction (6R)-5,10-methylene-5,6,7,8-tetrahydrofolate + glycine + H2O = (6S)-5,6,7,8-tetrahydrofolate + L-serine. Its pathway is one-carbon metabolism; tetrahydrofolate interconversion. It participates in amino-acid biosynthesis; glycine biosynthesis; glycine from L-serine: step 1/1. Functionally, catalyzes the reversible interconversion of serine and glycine with tetrahydrofolate (THF) serving as the one-carbon carrier. This reaction serves as the major source of one-carbon groups required for the biosynthesis of purines, thymidylate, methionine, and other important biomolecules. Also exhibits THF-independent aldolase activity toward beta-hydroxyamino acids, producing glycine and aldehydes, via a retro-aldol mechanism. This Porphyromonas gingivalis (strain ATCC 33277 / DSM 20709 / CIP 103683 / JCM 12257 / NCTC 11834 / 2561) protein is Serine hydroxymethyltransferase.